Consider the following 139-residue polypeptide: Probable disulfide formation protein C 1 (139 aa).

The chain crosses the membrane as a helical span at residues 8 to 27 (EYALFTAWGASFIATLGSLY). Residues Cys-37 and Cys-40 are joined by a disulfide bond. Transmembrane regions (helical) follow at residues 42-61 (YQRI…VVKK) and 68-85 (YSLP…YHYA). Cys-99 and Cys-104 are joined by a disulfide. Residues 113-135 (GFVTIPFLALIGFITIAVCSFIV) form a helical membrane-spanning segment.

It belongs to the DsbB family. BdbC subfamily.

The protein resides in the cell membrane. In terms of biological role, required for disulfide bond formation in some proteins. The sequence is that of Probable disulfide formation protein C 1 (bdbC1) from Bacillus cereus (strain ATCC 10987 / NRS 248).